A 314-amino-acid chain; its full sequence is Methionyl-tRNA formyltransferase (314 aa).

111–114 lines the (6S)-5,6,7,8-tetrahydrofolate pocket; that stretch reads SLLP.

This sequence belongs to the Fmt family.

It catalyses the reaction L-methionyl-tRNA(fMet) + (6R)-10-formyltetrahydrofolate = N-formyl-L-methionyl-tRNA(fMet) + (6S)-5,6,7,8-tetrahydrofolate + H(+). Its function is as follows. Attaches a formyl group to the free amino group of methionyl-tRNA(fMet). The formyl group appears to play a dual role in the initiator identity of N-formylmethionyl-tRNA by promoting its recognition by IF2 and preventing the misappropriation of this tRNA by the elongation apparatus. In Nitrobacter winogradskyi (strain ATCC 25391 / DSM 10237 / CIP 104748 / NCIMB 11846 / Nb-255), this protein is Methionyl-tRNA formyltransferase.